The chain runs to 262 residues: MSERESWHKEIDLFLVAMGYFTRIPMPKWVEVDSDKLNKASRYFGLVGLLVGLLSAIVFWLTQNWLPAGVSVLLAMLVGVLLTGGFHEDGLADTFDGFGGGWTAEDKLRIMKDSRLGSYGALALMLALLLKWQLLVELALYDPVVAGSALIVAHTVSRVVSASIIFSEKYVRDDETSKSKPLSQHQGINELLILIASGVLVLLFLKGLAALSLLLVMIGLRRLIIVIFRRQIGGYTGDTLGAAQQIAEIVCYFVLLVVGNIL.

A run of 6 helical transmembrane segments spans residues 43-63 (YFGL…WLTQ), 66-86 (LPAG…TGGF), 120-140 (GALA…ELAL), 146-166 (AGSA…SIIF), 191-211 (LLIL…LAAL), and 242-262 (AAQQ…GNIL).

The protein belongs to the CobS family. Mg(2+) is required as a cofactor.

The protein resides in the cell inner membrane. The enzyme catalyses alpha-ribazole + adenosylcob(III)inamide-GDP = adenosylcob(III)alamin + GMP + H(+). It catalyses the reaction alpha-ribazole 5'-phosphate + adenosylcob(III)inamide-GDP = adenosylcob(III)alamin 5'-phosphate + GMP + H(+). Its pathway is cofactor biosynthesis; adenosylcobalamin biosynthesis; adenosylcobalamin from cob(II)yrinate a,c-diamide: step 7/7. In terms of biological role, joins adenosylcobinamide-GDP and alpha-ribazole to generate adenosylcobalamin (Ado-cobalamin). Also synthesizes adenosylcobalamin 5'-phosphate from adenosylcobinamide-GDP and alpha-ribazole 5'-phosphate. The sequence is that of Adenosylcobinamide-GDP ribazoletransferase from Shewanella baltica (strain OS195).